The following is a 204-amino-acid chain: NAD(P)H dehydrogenase (quinone) (204 aa).

The Flavodoxin-like domain occupies 3 to 194 (VLIVFYSMYG…AGARYQGRHV (192 aa)). Residues 9–14 (SMYGHI) and 82–84 (TRF) contribute to the FMN site. Tyr11 lines the NAD(+) pocket. Trp102 is a binding site for substrate. Position 138 (His138) interacts with FMN.

Belongs to the WrbA family. FMN serves as cofactor.

The enzyme catalyses a quinone + NADH + H(+) = a quinol + NAD(+). It catalyses the reaction a quinone + NADPH + H(+) = a quinol + NADP(+). This is NAD(P)H dehydrogenase (quinone) from Syntrophobacter fumaroxidans (strain DSM 10017 / MPOB).